The chain runs to 90 residues: Serine-rich and transmembrane domain-containing 2 (90 aa).

The N-linked (GlcNAc...) asparagine glycan is linked to Asn-11. A helical transmembrane segment spans residues 38–58; that stretch reads YVGLFLSLLAILLILLFTMLL. The disordered stretch occupies residues 69 to 90; that stretch reads SDSTESVPQFTDVEMQSRIPTP.

The protein localises to the membrane. In Homo sapiens (Human), this protein is Serine-rich and transmembrane domain-containing 2.